The following is a 360-amino-acid chain: Phospho-N-acetylmuramoyl-pentapeptide-transferase (360 aa).

10 helical membrane passes run Arg25–Ile45, Thr73–Leu93, Tyr97–Tyr117, Leu128–Leu148, Val168–Ser188, Gly199–Ser219, Thr236–Phe256, Leu262–Ile282, Leu288–Val308, and Val338–Lys358.

It belongs to the glycosyltransferase 4 family. MraY subfamily. Mg(2+) serves as cofactor.

It localises to the cell inner membrane. The enzyme catalyses UDP-N-acetyl-alpha-D-muramoyl-L-alanyl-gamma-D-glutamyl-meso-2,6-diaminopimeloyl-D-alanyl-D-alanine + di-trans,octa-cis-undecaprenyl phosphate = di-trans,octa-cis-undecaprenyl diphospho-N-acetyl-alpha-D-muramoyl-L-alanyl-D-glutamyl-meso-2,6-diaminopimeloyl-D-alanyl-D-alanine + UMP. Its pathway is cell wall biogenesis; peptidoglycan biosynthesis. Its function is as follows. Catalyzes the initial step of the lipid cycle reactions in the biosynthesis of the cell wall peptidoglycan: transfers peptidoglycan precursor phospho-MurNAc-pentapeptide from UDP-MurNAc-pentapeptide onto the lipid carrier undecaprenyl phosphate, yielding undecaprenyl-pyrophosphoryl-MurNAc-pentapeptide, known as lipid I. The sequence is that of Phospho-N-acetylmuramoyl-pentapeptide-transferase from Idiomarina loihiensis (strain ATCC BAA-735 / DSM 15497 / L2-TR).